A 51-amino-acid chain; its full sequence is Small integral membrane protein 38 (51 aa).

A helical transmembrane segment spans residues 13 to 33; that stretch reads PLLALLVVILLARLILWSCLG.

It is found in the membrane. This chain is Small integral membrane protein 38, found in Homo sapiens (Human).